The sequence spans 443 residues: ATP-dependent protease ATPase subunit HslU (443 aa).

Residues Ile20, 62 to 67 (GVGKTE), Asp255, Glu321, and Arg393 contribute to the ATP site.

It belongs to the ClpX chaperone family. HslU subfamily. In terms of assembly, a double ring-shaped homohexamer of HslV is capped on each side by a ring-shaped HslU homohexamer. The assembly of the HslU/HslV complex is dependent on binding of ATP.

It is found in the cytoplasm. In terms of biological role, ATPase subunit of a proteasome-like degradation complex; this subunit has chaperone activity. The binding of ATP and its subsequent hydrolysis by HslU are essential for unfolding of protein substrates subsequently hydrolyzed by HslV. HslU recognizes the N-terminal part of its protein substrates and unfolds these before they are guided to HslV for hydrolysis. The protein is ATP-dependent protease ATPase subunit HslU of Helicobacter pylori (strain G27).